Consider the following 580-residue polypeptide: DNA ligase 1 (580 aa).

An ATP-binding site is contributed by E245. The active-site N6-AMP-lysine intermediate is K247. Residues R252, R267, E297, F343, R420, and K426 each coordinate ATP.

Belongs to the ATP-dependent DNA ligase family. Mg(2+) serves as cofactor.

It catalyses the reaction ATP + (deoxyribonucleotide)n-3'-hydroxyl + 5'-phospho-(deoxyribonucleotide)m = (deoxyribonucleotide)n+m + AMP + diphosphate.. Functionally, DNA ligase that seals nicks in double-stranded DNA during DNA replication, DNA recombination and DNA repair. In Methanosarcina acetivorans (strain ATCC 35395 / DSM 2834 / JCM 12185 / C2A), this protein is DNA ligase 1.